The following is a 101-amino-acid chain: Large ribosomal subunit protein uL23 (101 aa).

The protein belongs to the universal ribosomal protein uL23 family. Part of the 50S ribosomal subunit. Contacts protein L29, and trigger factor when it is bound to the ribosome.

Its function is as follows. One of the early assembly proteins it binds 23S rRNA. One of the proteins that surrounds the polypeptide exit tunnel on the outside of the ribosome. Forms the main docking site for trigger factor binding to the ribosome. The polypeptide is Large ribosomal subunit protein uL23 (Haemophilus ducreyi (strain 35000HP / ATCC 700724)).